The primary structure comprises 601 residues: MPRQEHIRNFSIIAHIDHGKSTLADRILEVTGLVSDREKRDQYLDRMELERERGITIKAQSVRIPYTAKDGRKYVLNLIDTPGHVDFNYEVSRSLAACEGALLVVDASQGVEAQTLANVYLALDHNLEVIPVLNKVDLPSADADRVKHEIEESIGLDCSDAVAVSAKTGLNVDKVLEAIVERLPAPEGNLNAPLKALIFDSWYDSYQGVVVLFRIVDGVLRKGDRIKLFATERSYEVIRLGVFSPEIVDMTELGAGEVGFLCANIKELGDAKVGDTITHVDRPAEVPVEGFKEVQPMVFCGLYPTDSADYEQLKYALEKLQLNDAAFSYEPETSQALGFGYRCGFLGLLHMEIIQERLEREFQVELIATAPSVIYKIDTVDGKKSDIDNPSKLPDPTKIAALYEPYVRMDIHVPNDYVGNVLKLCEEKRGIQKNMGYIASNRVVITYELPFAEIVFDFFDRLKSGTKGYASMDYEFIDYRQSALVKLDILINGEAVDALAVIVHRDKAYHYGRALALKLKRTIPRQMFEVAIQAAIGQKIIARESISALRKNVTAKCYGGDITRKRKLLEKQKEGKKRMKRMGNVELPQEAFLAALQVGDE.

Residues 5-187 (EHIRNFSIIA…AIVERLPAPE (183 aa)) form the tr-type G domain. Residues 17–22 (DHGKST) and 134–137 (NKVD) each bind GTP.

This sequence belongs to the TRAFAC class translation factor GTPase superfamily. Classic translation factor GTPase family. LepA subfamily.

The protein resides in the cell inner membrane. The enzyme catalyses GTP + H2O = GDP + phosphate + H(+). Required for accurate and efficient protein synthesis under certain stress conditions. May act as a fidelity factor of the translation reaction, by catalyzing a one-codon backward translocation of tRNAs on improperly translocated ribosomes. Back-translocation proceeds from a post-translocation (POST) complex to a pre-translocation (PRE) complex, thus giving elongation factor G a second chance to translocate the tRNAs correctly. Binds to ribosomes in a GTP-dependent manner. The polypeptide is Elongation factor 4 (Nitratidesulfovibrio vulgaris (strain DSM 19637 / Miyazaki F) (Desulfovibrio vulgaris)).